The chain runs to 1442 residues: Trafficking protein particle complex subunit 10 (1442 aa).

Residues 1-23 are compositionally biased toward polar residues; that stretch reads MSNVSPNSMNLNGSTSSTASVND. 6 disordered regions span residues 1–86, 251–277, 535–564, 1208–1238, 1316–1335, and 1422–1442; these read MSNV…SSSS, TSSG…TSTK, GSSS…NSGI, LSSS…NHSK, QQQQ…QKQQ, and LQDN…TNKT. Residues 39 to 86 show a composition bias toward low complexity; it reads SSSSASSISNSNSSSSNNLKPSTQPLSSSSTLNTPTQFSLQHSSSSSS. Residues 535–553 show a composition bias toward low complexity; that stretch reads GSSSSNTPSSTSATTAANG. Residues 554-564 show a composition bias toward polar residues; sequence KNTPMPSNSGI. A compositionally biased stretch (low complexity) spans 1208 to 1236; that stretch reads LSSSTSPSSATDSSNSNGNNNNNNNNNNH. Low complexity predominate over residues 1425–1442; that stretch reads NNNNNNNSINSQTSTNKT.

This sequence belongs to the TMEM1 family. Part of the multisubunit TRAPP (transport protein particle) complex.

It is found in the golgi apparatus. It localises to the cis-Golgi network. Functionally, may play a role in vesicular transport from endoplasmic reticulum to Golgi. In Dictyostelium discoideum (Social amoeba), this protein is Trafficking protein particle complex subunit 10 (trapcc10-1).